Here is a 418-residue protein sequence, read N- to C-terminus: MGNITKRGSRDFAADSAVLLEGSLATALHSRLYEAIIKEDCDTIRTLLRNHPVNQPLTLLASSTGYRFLSQQTQPIFPIHLAAEYRKPQSLLCLLQHGADPEVRDAQGLTTLHLMLLNWPVTSTTWTKPSTRIQKILTDIQNNAVLCLRILCDHGAQVNARVDNSNKHSPLHLAITYGTYPVLSFLAQNGAQVNAINESSMTPLHMAADILNKNMIETLIACGANVNCAISSTGNTALKLAVCTASSKAGRLLAAGVGCIRLLLNHGAQVNAQDHEGQTALHEACFGGREVIINLLLEFEANVNILTRNGESPIYMYLQRSSNIRDVTLLARLLYRTYPLRLSNKQGALPAGIMLPEFHLLRETLIKLSKKPLTLEAICKRNIRNVYGEKYKFQLKKLLPAKLWNSIYGIYDFTYLLK.

8 ANK repeats span residues 27-57, 74-103, 131-160, 166-195, 199-228, 233-272, 276-305, and 309-342; these read ALHS…NQPL, QPIF…DPEV, TRIQ…QVNA, NKHS…QVNA, SSMT…NVNC, TGNT…QVNA, EGQT…NVNI, and NGES…PLRL.

The polypeptide is Ankyrin repeat domain-containing protein 61 (Ankrd61) (Rattus norvegicus (Rat)).